The primary structure comprises 554 residues: CTP synthase (554 aa).

The tract at residues 1–265 is amidoligase domain; sequence MTPLIFVTGG…DELVIEQFKL (265 aa). S13 provides a ligand contact to CTP. Residue S13 coordinates UTP. ATP contacts are provided by residues 14 to 19 and D71; that span reads SLGKGI. The Mg(2+) site is built by D71 and E139. CTP contacts are provided by residues 146 to 148, 186 to 191, and K222; these read DIE and KTKPTQ. UTP-binding positions include 186–191 and K222; that span reads KTKPTQ. The Glutamine amidotransferase type-1 domain maps to 292–545; that stretch reads NIAVVGKYVD…VRAAREKKAG (254 aa). G353 is a binding site for L-glutamine. Residue C380 is the Nucleophile; for glutamine hydrolysis of the active site. L-glutamine is bound by residues 381 to 384, E404, and R471; that span reads YGMQ. Active-site residues include H518 and E520.

It belongs to the CTP synthase family. In terms of assembly, homotetramer.

It catalyses the reaction UTP + L-glutamine + ATP + H2O = CTP + L-glutamate + ADP + phosphate + 2 H(+). The enzyme catalyses L-glutamine + H2O = L-glutamate + NH4(+). It carries out the reaction UTP + NH4(+) + ATP = CTP + ADP + phosphate + 2 H(+). It functions in the pathway pyrimidine metabolism; CTP biosynthesis via de novo pathway; CTP from UDP: step 2/2. With respect to regulation, allosterically activated by GTP, when glutamine is the substrate; GTP has no effect on the reaction when ammonia is the substrate. The allosteric effector GTP functions by stabilizing the protein conformation that binds the tetrahedral intermediate(s) formed during glutamine hydrolysis. Inhibited by the product CTP, via allosteric rather than competitive inhibition. Its function is as follows. Catalyzes the ATP-dependent amination of UTP to CTP with either L-glutamine or ammonia as the source of nitrogen. Regulates intracellular CTP levels through interactions with the four ribonucleotide triphosphates. This is CTP synthase from Xanthomonas euvesicatoria pv. vesicatoria (strain 85-10) (Xanthomonas campestris pv. vesicatoria).